The sequence spans 69 residues: DNA-directed RNA polymerase subunit omega (69 aa).

The protein belongs to the RNA polymerase subunit omega family. In terms of assembly, the RNAP catalytic core consists of 2 alpha, 1 beta, 1 beta' and 1 omega subunit. When a sigma factor is associated with the core the holoenzyme is formed, which can initiate transcription.

It catalyses the reaction RNA(n) + a ribonucleoside 5'-triphosphate = RNA(n+1) + diphosphate. In terms of biological role, promotes RNA polymerase assembly. Latches the N- and C-terminal regions of the beta' subunit thereby facilitating its interaction with the beta and alpha subunits. The chain is DNA-directed RNA polymerase subunit omega from Pelotomaculum thermopropionicum (strain DSM 13744 / JCM 10971 / SI).